A 285-amino-acid polypeptide reads, in one-letter code: Hydroxyethylthiazole kinase (285 aa).

M43 contacts substrate. ATP-binding residues include K119 and S172. A substrate-binding site is contributed by G199.

This sequence belongs to the Thz kinase family. The cofactor is Mg(2+).

It carries out the reaction 5-(2-hydroxyethyl)-4-methylthiazole + ATP = 4-methyl-5-(2-phosphooxyethyl)-thiazole + ADP + H(+). It participates in cofactor biosynthesis; thiamine diphosphate biosynthesis; 4-methyl-5-(2-phosphoethyl)-thiazole from 5-(2-hydroxyethyl)-4-methylthiazole: step 1/1. Functionally, catalyzes the phosphorylation of the hydroxyl group of 4-methyl-5-beta-hydroxyethylthiazole (THZ). The sequence is that of Hydroxyethylthiazole kinase from Desulfovibrio desulfuricans (strain ATCC 27774 / DSM 6949 / MB).